The chain runs to 233 residues: Small ribosomal subunit protein uS3 (233 aa).

The region spanning 39–107 is the KH type-2 domain; the sequence is VRQFLTKELS…PAQINTYEIR (69 aa).

This sequence belongs to the universal ribosomal protein uS3 family. In terms of assembly, part of the 30S ribosomal subunit. Forms a tight complex with proteins S10 and S14.

Its function is as follows. Binds the lower part of the 30S subunit head. Binds mRNA in the 70S ribosome, positioning it for translation. This Hamiltonella defensa subsp. Acyrthosiphon pisum (strain 5AT) protein is Small ribosomal subunit protein uS3.